Consider the following 878-residue polypeptide: MTSAEIREAFLRYFETQGHTRVASSSLVPANDPTLLFTNAGMNQFKDCFLGLEKRDYVRATTSQKCVRAGGKHNDLDNVGYTARHHTFFEMLGNFSFGDYFKRDALKFAWEFLTSEQWLALPKDKLYVTVYHTDDEAYDIWNKEIGLAPERIIRIGDNKGEKYASDNFWAMGDTGPCGPCSEIFFDHGEHIWGGLPGSPEEDGDRFIEIWNNVFMQFNRTADGVLHPLPAPSVDTGMGLERISAVLQHVNSNYDIDLFQHLLKAAANIIGIEDEGQPSLRVVADHARSCCFLIADGVNPSNEGRGYVLRRIIRRAVRHGNKLGATGTFFYKMLQPLIEVMGQAYPELEARREVIEATLIREEEQFAKTLEQGLKLLEGELAQLKDKTIPGATVFKLYDTYGFPTDLTADIARERGFIIDEAGFEVEMAAQRQRARDAGKFAVDYNNIVKVEGETQFDGYTNTTGQGQIVAIYKDGVQVDEVSEGDEALIVLNQTPFYAESGGQIGDTGIFKNETGIFEVQDTKKSGGAFVHQGIVTVGNLKTSQNVEAIVKADIREATARNHSATHLLHAALRQILGSHVQQKGSLVASDILRFDFANDQPVSFEQLQQVERLVNAEIIANTAVTTELLDIETAKAKGAMMLFGEKYGDEVRVLSMGSVIDEKNFSIELCGGIHVKRTGDIGLFKITSEGGVAAGVRRIEAVTGTKALEVVQKADHDIQHINSLLKAQKDQTVERVQANVELVSALQKQIEQLNQKLANFQAADLIDQVQTIAGRQTLITTVQGVDAKALRNLHDSVKSKLENAVIVLAGVEGDKVSLLASVASQYTANLKAGDIIKHLATELGGKGGGKPDLAQGGAPLNEKFGQVMAALPAWLEQK.

Residues His562, His566, Cys670, and His674 each coordinate Zn(2+).

It belongs to the class-II aminoacyl-tRNA synthetase family. Requires Zn(2+) as cofactor.

It is found in the cytoplasm. The enzyme catalyses tRNA(Ala) + L-alanine + ATP = L-alanyl-tRNA(Ala) + AMP + diphosphate. In terms of biological role, catalyzes the attachment of alanine to tRNA(Ala) in a two-step reaction: alanine is first activated by ATP to form Ala-AMP and then transferred to the acceptor end of tRNA(Ala). Also edits incorrectly charged Ser-tRNA(Ala) and Gly-tRNA(Ala) via its editing domain. This chain is Alanine--tRNA ligase, found in Acinetobacter baumannii (strain ACICU).